Reading from the N-terminus, the 248-residue chain is Mannose-binding protein C (248 aa).

The N-terminal stretch at 1–20 is a signal peptide; it reads MSLFPSLPLLLLSVVAASYS. Positions 42-99 constitute a Collagen-like domain; that stretch reads GINGFPGKDGRDGTKGEKGEPGQGLRGLQGPPGKLGPPGNPGPSGSPGPKGQKGDPGK. The tract at residues 43-111 is disordered; it reads INGFPGKDGR…DCDSSLAASE (69 aa). A 4-hydroxyproline modification is found at Pro-47. The segment covering 49–61 has biased composition (basic and acidic residues); that stretch reads KDGRDGTKGEKGE. 4-hydroxyproline occurs at positions 73, 79, 82, and 88. Over residues 75 to 87 the composition is skewed to pro residues; that stretch reads KLGPPGNPGPSGS. Over residues 93–102 the composition is skewed to basic and acidic residues; the sequence is QKGDPGKSPD. A coiled-coil region spans residues 112–130; sequence RKALQTEMARIKKWLTFSL. In terms of domain architecture, C-type lectin spans 134–245; sequence VGNKFFLTNG…CSSSHLAVCE (112 aa). 2 disulfides stabilise this stretch: Cys-155–Cys-244 and Cys-222–Cys-236.

In terms of assembly, oligomeric complex of 3 or more homotrimers. Interacts with MASP1 and MASP2. Interacts with MEP1A and MEP1B and may inhibit their catalytic activity. Post-translationally, hydroxylation on proline residues within the sequence motif, GXPG, is most likely to be 4-hydroxy as this fits the requirement for 4-hydroxylation in vertebrates.

The protein localises to the secreted. Calcium-dependent lectin involved in innate immune defense. Binds mannose, fucose and N-acetylglucosamine on different microorganisms and activates the lectin complement pathway. Binds to late apoptotic cells, as well as to apoptotic blebs and to necrotic cells, but not to early apoptotic cells, facilitating their uptake by macrophages. The protein is Mannose-binding protein C (MBL2) of Pongo pygmaeus (Bornean orangutan).